A 332-amino-acid chain; its full sequence is Glyceraldehyde-3-phosphate dehydrogenase 2 (332 aa).

Residues 11 to 12 (RI), D32, and R77 each bind NAD(+). Residues 148 to 150 (SCT), T179, 208 to 209 (TG), and R231 contribute to the D-glyceraldehyde 3-phosphate site. C149 acts as the Nucleophile in catalysis. N313 contributes to the NAD(+) binding site.

This sequence belongs to the glyceraldehyde-3-phosphate dehydrogenase family. In terms of assembly, homotetramer.

Its subcellular location is the cytoplasm. The catalysed reaction is D-glyceraldehyde 3-phosphate + phosphate + NAD(+) = (2R)-3-phospho-glyceroyl phosphate + NADH + H(+). It participates in carbohydrate degradation; glycolysis; pyruvate from D-glyceraldehyde 3-phosphate: step 1/5. In Drosophila pseudoobscura pseudoobscura (Fruit fly), this protein is Glyceraldehyde-3-phosphate dehydrogenase 2 (Gapdh2).